A 233-amino-acid chain; its full sequence is Large ribosomal subunit protein uL1 (233 aa).

Belongs to the universal ribosomal protein uL1 family. In terms of assembly, part of the 50S ribosomal subunit.

In terms of biological role, binds directly to 23S rRNA. The L1 stalk is quite mobile in the ribosome, and is involved in E site tRNA release. Its function is as follows. Protein L1 is also a translational repressor protein, it controls the translation of the L11 operon by binding to its mRNA. The polypeptide is Large ribosomal subunit protein uL1 (Novosphingobium aromaticivorans (strain ATCC 700278 / DSM 12444 / CCUG 56034 / CIP 105152 / NBRC 16084 / F199)).